Reading from the N-terminus, the 215-residue chain is C' protein (215 aa).

Residues 12–34 (MPSFLKKILKLRGRRQEDESRSR) form a disordered region. The tract at residues 15–22 (FLKKILKL) is involved in self-degradation and in host STAT1 degradation.

It belongs to the respirovirus protein C family. As to quaternary structure, the different isoforms interact (via C-terminus) with unphosphorylated and phosphorylated human STAT1 (via N-terminus), favoring the formation of parallel STAT1 homodimers. The different isoforms do not interact with host STAT2. C protein interacts with L protein; this interaction has an inhibitory effect on viral transcription and replication. In terms of processing, Y1 and Y2 proteins are produced not only by alternative initiation, but also by proteolytic cleavage of C'. Only alternative initiation is detected in vitro, whereas in vivo cleavage seems to be predominant.

The protein localises to the host cytoplasm. Its subcellular location is the virion. Functionally, the different isoforms prevent the establishment of cellular antiviral state by blocking the interferon-alpha/beta (IFN-alpha/beta) and IFN-gamma signaling pathways. They inhibit IFN-alpha/beta induced tyrosine phosphorylation of STAT1 and STAT2. Blocking the IFN-alpha/beta pathway requires binding to STAT1 in the cytoplasm. They inhibit IFN-gamma induced serine phosphorylation of STAT1. Block the IFN-gamma pathway by binding to and stabilizing the parallel form of the STAT1 dimer, further inducing high-molecular-weight complex (HMWC) formation and inhibition of transcription by IFN-gamma. May also have a role in preventing the cell to enter apoptosis. Modulate regulation of viral transcription and replication. Overexpression inhibits the viral RNA polymerase. The absence of all C', C, Y1 and Y2 proteins leads to viral delayed growth. Plays an important role in virion particles release. Modulates virion shape. The protein is C' protein (P/V/C) of Sendai virus (strain Z) (SeV).